A 531-amino-acid chain; its full sequence is Cytosolic Fe-S cluster assembly factor NAR1 (531 aa).

Cys20, Cys72, Cys75, Cys78, Cys184, and Cys239 together coordinate [4Fe-4S] cluster. The tract at residues 395–426 (TSSTTTTKTNPLVARRKARLSSKRSESGAQDV) is disordered. [4Fe-4S] cluster-binding residues include Cys442 and Cys446.

This sequence belongs to the NARF family.

Its function is as follows. Component of the cytosolic Fe/S protein assembly machinery. Required for maturation of extramitochondrial Fe/S proteins. May play a role in the transfer of pre-assembled Fe/S clusters to target apoproteins. This Meyerozyma guilliermondii (strain ATCC 6260 / CBS 566 / DSM 6381 / JCM 1539 / NBRC 10279 / NRRL Y-324) (Yeast) protein is Cytosolic Fe-S cluster assembly factor NAR1 (NAR1).